The primary structure comprises 32 residues: Peptide II.10.10 (32 aa).

3 disulfides stabilise this stretch: Cys5-Cys24, Cys10-Cys29, and Cys14-Cys31.

The protein belongs to the short scorpion toxin superfamily. Potassium channel inhibitor family. Alpha-KTx 10 subfamily. In terms of tissue distribution, expressed by the venom gland.

It localises to the secreted. The protein is Peptide II.10.10 of Centruroides tecomanus (Scorpion).